Here is a 284-residue protein sequence, read N- to C-terminus: Tryptophan 2,3-dioxygenase (284 aa).

Residues 51-55, tyrosine 113, and arginine 117 each bind substrate; that span reads FIIQH. Heme is bound at residue histidine 240. Residue threonine 254 participates in substrate binding.

Belongs to the tryptophan 2,3-dioxygenase family. Homotetramer. Requires heme as cofactor.

It catalyses the reaction L-tryptophan + O2 = N-formyl-L-kynurenine. It functions in the pathway amino-acid degradation; L-tryptophan degradation via kynurenine pathway; L-kynurenine from L-tryptophan: step 1/2. Functionally, heme-dependent dioxygenase that catalyzes the oxidative cleavage of the L-tryptophan (L-Trp) pyrrole ring and converts L-tryptophan to N-formyl-L-kynurenine. Catalyzes the oxidative cleavage of the indole moiety. This chain is Tryptophan 2,3-dioxygenase, found in Arthrobacter sp. (strain FB24).